A 218-amino-acid chain; its full sequence is Zinc finger CCHC-type and RNA-binding motif-containing protein 1 (218 aa).

The 79-residue stretch at 10 to 88 (STVYVSNLPF…RAIKASIAKD (79 aa)) folds into the RRM domain. The segment at 105–122 (SRCYECGDTGHLSYACPK) adopts a CCHC-type zinc-finger fold. Residues 119-218 (ACPKNMLGER…YFSDEDELSD (100 aa)) are disordered. The stretch at 132–188 (QKKEKKKRKRLVEEEEEEVVEEEESEDEGEDPALDSLSQAIAFQQARIDEEKNKYRH) forms a coiled coil. The segment covering 144-164 (EEEEEEVVEEEESEDEGEDPA) has biased composition (acidic residues). Residues 178 to 201 (RIDEEKNKYRHDPAEASTSEDSRR) are compositionally biased toward basic and acidic residues.

Component of the U11/U12 snRNPs that are part of the U12-type spliceosome.

Its subcellular location is the nucleus. The sequence is that of Zinc finger CCHC-type and RNA-binding motif-containing protein 1 (zcrb1) from Xenopus laevis (African clawed frog).